The sequence spans 973 residues: Putative cell agglutination protein pfl3 (973 aa).

An N-terminal signal peptide occupies residues 1–24 (MSLFPQILLRLLFLAFTLKSTSNA). 7 N-linked (GlcNAc...) asparagine glycosylation sites follow: Asn75, Asn96, Asn147, Asn171, Asn184, Asn218, and Asn253. 18 repeat units span residues 198–232 (GTIT…IPTA), 233–267 (GTVT…IPTA), 268–302 (GTRT…LPTA), 303–337 (GTNT…YPTA), 338–372 (GMVT…IPTA), 373–407 (GTVT…IPTA), 408–442 (GTRT…LPTA), 443–477 (GTNT…EPTA), 478–512 (GVVT…EPTA), 513–547 (GVVT…EPTA), 548–582 (GVVT…EPTA), 583–617 (GVVT…EPTA), 618–652 (GVVT…EPTA), 653–687 (GVVT…EPTA), 688–722 (GVVT…EPTA), 723–757 (GVVT…EPTA), 758–792 (GVVT…EPTA), and 793–828 (GYVT…VPSL). The segment at 198 to 828 (GTITLTTISG…GTVLQVVPSL (631 aa)) is 18 X 35 AA approximate tandem repeats. 2 N-linked (GlcNAc...) asparagine glycosylation sites follow: Asn352 and Asn393. A DIPSY domain is found at 820–973 (TVLQVVPSLF…SNVYFKAVPL (154 aa)). Residue Asn848 is glycosylated (N-linked (GlcNAc...) asparagine).

The protein belongs to the mam3/map4 family.

Its subcellular location is the cell surface. In terms of biological role, may be involved in agglutination during conjugation or other aspects of colony formation. Induces flocculation when overexpressed. The chain is Putative cell agglutination protein pfl3 from Schizosaccharomyces pombe (strain 972 / ATCC 24843) (Fission yeast).